A 66-amino-acid polypeptide reads, in one-letter code: Potassium channel toxin alpha-KTx 30.1 (66 aa).

Positions 1–24 (MNTGFFFFVIMATGLVLTFDTIHA) are cleaved as a signal peptide. 3 cysteine pairs are disulfide-bonded: Cys-30–Cys-50, Cys-36–Cys-55, and Cys-40–Cys-57.

It belongs to the short scorpion toxin superfamily. Potassium channel inhibitor family. Alpha-KTx 30 subfamily. In terms of tissue distribution, expressed by the venom gland.

Its subcellular location is the secreted. Inhibits Kv1.3/KCNA3 channel (1 uM of the toxin inhibits currents by 64.1%). In Scorpiops margerisonae (Scorpion), this protein is Potassium channel toxin alpha-KTx 30.1.